Here is a 273-residue protein sequence, read N- to C-terminus: Pantothenate synthetase (273 aa).

Residue 27-34 (MGALHEGH) participates in ATP binding. His34 functions as the Proton donor in the catalytic mechanism. Gln58 contacts (R)-pantoate. Residue Gln58 coordinates beta-alanine. 144–147 (GKKD) contributes to the ATP binding site. Residue Gln150 participates in (R)-pantoate binding. ATP-binding positions include Val173 and 181–184 (LSSR).

This sequence belongs to the pantothenate synthetase family. In terms of assembly, homodimer.

Its subcellular location is the cytoplasm. It carries out the reaction (R)-pantoate + beta-alanine + ATP = (R)-pantothenate + AMP + diphosphate + H(+). It participates in cofactor biosynthesis; (R)-pantothenate biosynthesis; (R)-pantothenate from (R)-pantoate and beta-alanine: step 1/1. Its function is as follows. Catalyzes the condensation of pantoate with beta-alanine in an ATP-dependent reaction via a pantoyl-adenylate intermediate. The protein is Pantothenate synthetase of Sulfurimonas denitrificans (strain ATCC 33889 / DSM 1251) (Thiomicrospira denitrificans (strain ATCC 33889 / DSM 1251)).